Reading from the N-terminus, the 255-residue chain is uncharacterized protein (255 aa).

NADP(+) contacts are provided by isoleucine 13, arginine 37, aspartate 55, asparagine 81, tyrosine 148, lysine 152, valine 180, and threonine 182. Tyrosine 148 (proton donor) is an active-site residue. The active-site Lowers pKa of active site Tyr is lysine 152.

It belongs to the short-chain dehydrogenases/reductases (SDR) family.

Its function is as follows. Involved in osmoadaptation. This is an uncharacterized protein from Emericella nidulans (strain FGSC A4 / ATCC 38163 / CBS 112.46 / NRRL 194 / M139) (Aspergillus nidulans).